A 607-amino-acid chain; its full sequence is Kelch repeat and BTB domain-containing protein 3 (607 aa).

Residues 48-115 form the BTB domain; sequence YDFKIIMKEE…AYTGKTRITD (68 aa). Residues 150–250 form the BACK domain; the sequence is CLHLLSLSDS…QLSEDTLQDY (101 aa). 5 Kelch repeats span residues 291 to 337, 339 to 390, 400 to 450, 452 to 502, and 548 to 595; these read KYIF…SSYG, KIFL…TPRT, RLFV…ACQN, IYVL…KAVP, and KIYI…VIQF.

This Mus musculus (Mouse) protein is Kelch repeat and BTB domain-containing protein 3.